Reading from the N-terminus, the 696-residue chain is SLIT and NTRK-like protein 1 (696 aa).

A signal peptide spans 1-17 (MLLWILLLETSLCFAAG). The region spanning 18–57 (NVTGDVCKEKICSCNEIEGDLHVDCEKKGFTSLQRFTAPT) is the LRRNT 1 domain. Topologically, residues 18-622 (NVTGDVCKEK…SRVSISVLVP (605 aa)) are extracellular. LRR repeat units lie at residues 59-80 (QFYHLFLHGNSLTRLFPNEFAN), 83-104 (NAVSLHMENNGLHEIVPGAFLG), 106-128 (QLVKRLHINNNKIKSFRKQTFLG), 131-152 (DLEYLQADFNLLRDIDPGAFQD), 155-176 (KLEVLILNDNLISTLPANVFQY), and 178-199 (PITHLDLRGNRLKTLPYEEVLE). One can recognise an LRRCT 1 domain in the interval 212 to 263 (NPWDCTCDLLSLKEWLENIPKNALIGRVVCEAPTRLQGKDLNETTEQDLCPL). The interval 265 to 314 (NRVDSSLPAPPAQEETFAPGPLPTPFKTNGQEDHATPGSAPNGGTKIPGN) is disordered. The LRRNT 2 domain occupies 332–373 (NKPLANSLPCPGGCSCDHIPGSGLKMNCNNRNVSSLADLKPK). LRR repeat units lie at residues 376–397 (NVQELFLRDNKIHSIRKSHFVD), 400–421 (NLILLDLGNNNIATVENNTFKN), 424–445 (DLRWLYMDSNYLDTLSREKFAG), 448–469 (NLEYLNVEYNAIQLILPGTFNA), 472–493 (KLRILILNNNLLRSLPVDVFAG), and 495–516 (SLSKLSLHNNYFMYLPVAGVLD). The LRRCT 2 domain occupies 529–580 (NPWECSCTIVPFKQWAERLGSEVLMSDLKCETPVNFFRKDFMLLSNDEICPQ). Residues 623-643 (GLLLVFVTSAFTVVGMLVFIL) traverse the membrane as a helical segment. The Cytoplasmic portion of the chain corresponds to 644–696 (RNRKRSKRRDANSSASEINSLQTVCDSSYWHNGPYNADGAHRVYDCGSHSLSD). Ser-695 is modified (phosphoserine; by CK2).

Belongs to the SLITRK family. Can form homodimers; homodimerization requires repeat LRR 2. Interacts with YWHAB, YWHAE, YWHAG, YWHAH, SFN, YWHAQ and YWHAZ. In terms of processing, undergoes proteolytic cleavage that results in shedding of the ectodomain and cleavage of the C-terminal cytoplasmic tail. Glycosylated. Phosphorylation at Ser-695 is necessary for proper function in promoting neurite outgrowth. In terms of tissue distribution, expressed predominantly in the frontal lobe of the cerebral cortex of the brain. Also expressed in some astrocytic brain tumors such as astrocytomas, oligodendrogliomas, glioblastomas, gangliogliomas and primitive neuroectodermal tumors.

It localises to the membrane. Its subcellular location is the secreted. The protein localises to the synapse. In terms of biological role, it is involved in synaptogenesis and promotes excitatory synapse differentiation. Enhances neuronal dendrite outgrowth. The polypeptide is SLIT and NTRK-like protein 1 (SLITRK1) (Homo sapiens (Human)).